We begin with the raw amino-acid sequence, 379 residues long: Actin, cytoplasmic (379 aa).

The protein belongs to the actin family.

The protein localises to the cytoplasm. It localises to the cytoskeleton. It carries out the reaction ATP + H2O = ADP + phosphate + H(+). Its function is as follows. Actins are highly conserved proteins that are involved in various types of cell motility and are ubiquitously expressed in all eukaryotic cells. The chain is Actin, cytoplasmic from Euplotes crassus.